Here is a 975-residue protein sequence, read N- to C-terminus: Glycine dehydrogenase (decarboxylating) (975 aa).

Position 723 is an N6-(pyridoxal phosphate)lysine (Lys723).

It belongs to the GcvP family. As to quaternary structure, the glycine cleavage system is composed of four proteins: P, T, L and H. Requires pyridoxal 5'-phosphate as cofactor.

The catalysed reaction is N(6)-[(R)-lipoyl]-L-lysyl-[glycine-cleavage complex H protein] + glycine + H(+) = N(6)-[(R)-S(8)-aminomethyldihydrolipoyl]-L-lysyl-[glycine-cleavage complex H protein] + CO2. The glycine cleavage system catalyzes the degradation of glycine. The P protein binds the alpha-amino group of glycine through its pyridoxal phosphate cofactor; CO(2) is released and the remaining methylamine moiety is then transferred to the lipoamide cofactor of the H protein. The polypeptide is Glycine dehydrogenase (decarboxylating) (Burkholderia multivorans (strain ATCC 17616 / 249)).